The sequence spans 1081 residues: Psi-producing oxygenase A (1081 aa).

The interval 105–446 (TKSFLNMLWN…DGAFNDDDLV (342 aa)) is linoleate 8R-lipoxygenase. H202 is a heme b binding site. The active site involves Y374. H377 is a heme b binding site. Residues 654–1081 (IFISSHAACM…GELPQLKEDF (428 aa)) are 9,12-octadecadienoate 8-hydroperoxide 8R-isomerase.

It belongs to the peroxidase family. In terms of assembly, homotetramer. Heme b serves as cofactor.

It carries out the reaction (9Z,12Z)-octadecadienoate + O2 = (8R,9Z,12Z)-8-hydroperoxyoctadeca-9,12-dienoate. The enzyme catalyses (8R,9Z,12Z)-8-hydroperoxyoctadeca-9,12-dienoate = (5S,8R,9Z,12Z)-5,8-dihydroxyoctadeca-9,12-dienoate. Its function is as follows. Bifunctional heme-containing enzyme that oxidizes linoleic acid to (8R,9Z,12Z)-8-hydroperoxyoctadeca-9,12-dienoate (within the N-terminal heme peroxidase domain), which is subsequently isomerized to (5S,8R,9Z,12Z)-5,8-dihydroxyoctadeca-9,12-dienoate (within the C-terminal P450 heme thiolate domain). Oxidized unsaturated fatty acids, so-called oxylipins, derived from endogenous fatty acids, influence the development of the asexual conidiophores and sexual cleistothecia and regulate the secondary metabolism. These substances were collectively named psi factors and are primarily a mixture of hydroxylated oleic, linoleic and alpha-linolenic acids. They are termed psi-beta, psi-alpha, and psi-gamma, respectively. This chain is Psi-producing oxygenase A (ppoA), found in Emericella nidulans (Aspergillus nidulans).